The following is a 380-amino-acid chain: Putative 8-amino-7-oxononanoate synthase (380 aa).

Residue Arg18 participates in substrate binding. Position 106–107 (106–107) interacts with pyridoxal 5'-phosphate; that stretch reads GY. His131 is a substrate binding site. Pyridoxal 5'-phosphate is bound by residues Ser179, 205-208, and 236-239; these read DEAH and TFGK. N6-(pyridoxal phosphate)lysine is present on Lys239. Residue Thr352 coordinates substrate.

It belongs to the class-II pyridoxal-phosphate-dependent aminotransferase family. BioF subfamily. As to quaternary structure, homodimer. Pyridoxal 5'-phosphate serves as cofactor.

It catalyses the reaction 6-carboxyhexanoyl-[ACP] + L-alanine + H(+) = (8S)-8-amino-7-oxononanoate + holo-[ACP] + CO2. Its pathway is cofactor biosynthesis; biotin biosynthesis. Catalyzes the decarboxylative condensation of pimeloyl-[acyl-carrier protein] and L-alanine to produce 8-amino-7-oxononanoate (AON), [acyl-carrier protein], and carbon dioxide. In Neisseria meningitidis serogroup C (strain 053442), this protein is Putative 8-amino-7-oxononanoate synthase (bioF).